The chain runs to 290 residues: Syntaxin-1A (290 aa).

The segment at 1-21 (MTKDRLAALQAAQSDDEDMPE) is disordered. Residues 1-267 (MTKDRLAALQ…KYQSKARRKK (267 aa)) lie on the Cytoplasmic side of the membrane. The t-SNARE coiled-coil homology domain occupies 194 to 256 (LADIEARHAD…QTATQDTKKA (63 aa)). A helical; Anchor for type IV membrane protein membrane pass occupies residues 268-289 (IWIAICVLIAIIILVVFLAIYL). A topological domain (vesicular) is located at residue Thr-290.

The protein belongs to the syntaxin family. Post-translationally, (Microbial infection) Targeted and hydrolyzed by the light chain (LC) of P.bifermentans PMP1. Cleavage probably inhibits neurotransmitter release.

The protein resides in the cytoplasmic vesicle. Its subcellular location is the secretory vesicle. The protein localises to the synaptic vesicle membrane. Functionally, plays a critical role in several secretory processes. The sequence is that of Syntaxin-1A from Anopheles gambiae (African malaria mosquito).